Here is a 1048-residue protein sequence, read N- to C-terminus: Calcium-transporting ATPase, endoplasmic reticulum-type (1048 aa).

Topologically, residues 1–63 (MEEKPFPAWS…WRLVLEQFDD (63 aa)) are cytoplasmic. Residues 64–84 (TLVKILLGAAFISFVLAYVNQ) traverse the membrane as a helical segment. The Lumenal segment spans residues 85-93 (DETGESGFE). Residues 94 to 114 (AYVEPLVILWILVLNAIVGVW) traverse the membrane as a helical segment. Over 115–213 (QESNAEKALE…DCELQAKENM (99 aa)) the chain is Cytoplasmic. Residues 214–234 (VFAGTTVVNGSCICIVVNTGM) form a helical membrane-spanning segment. Topologically, residues 235 to 267 (CTEIGKIQRQIHDASMEESDTPLKKKLDEFGNR) are lumenal. Residues 268–288 (LTFAIGVVCLVVWAINYKYFL) form a helical membrane-spanning segment. Residues 289 to 312 (SWEVVDDWPSDFRFSFEKCAYYFK) lie on the Cytoplasmic side of the membrane. A helical transmembrane segment spans residues 313-333 (IAVALAVAAIPEGLPSVITTC). Positions 319, 320, 322, and 324 each coordinate Ca(2+). The Lumenal portion of the chain corresponds to 334–800 (LALGTRKMAQ…ISSNVGEVIS (467 aa)). Catalysis depends on aspartate 366, which acts as the 4-aspartylphosphate intermediate. Positions 728 and 732 each coordinate Mg(2+). Positions 794 and 797 each coordinate Ca(2+). A helical transmembrane segment spans residues 801–821 (IFLTAVLGIPECLIPVQLLWV). Ca(2+) contacts are provided by asparagine 822, threonine 825, and aspartate 826. At 822–862 (NLVTDGPPATALGFNPADVDIMQKPPRKNTDALINSWVFFR) the chain is on the cytoplasmic side. A helical transmembrane segment spans residues 863–883 (YMVIGSYVGIATVGIFIVWYT). Over 884 to 944 (QASFLGINIV…CEYFTVGKVK (61 aa)) the chain is Lumenal. Residues 945 to 965 (AMTLSLSVLVAIEMFNSLNAL) form a helical membrane-spanning segment. Glutamate 957 is a binding site for Ca(2+). Residues 966 to 981 (SEDNSLIKMPPWRNPW) are Cytoplasmic-facing. A helical membrane pass occupies residues 982-1002 (LLVAMSLSFALHSVILYVPFL). Over 1003–1007 (ADIFG) the chain is Lumenal. A helical membrane pass occupies residues 1008–1028 (IVPLSLYEWLLVILLSAPVIL). Topologically, residues 1029-1048 (IDEVLKFVGRRRRRTKLKAA) are cytoplasmic.

This sequence belongs to the cation transport ATPase (P-type) (TC 3.A.3) family. Type IIA subfamily. As to expression, 9-fold higher level in roots compared with leaves.

It localises to the endoplasmic reticulum membrane. The enzyme catalyses Ca(2+)(in) + ATP + H2O = Ca(2+)(out) + ADP + phosphate + H(+). Functionally, this magnesium-dependent enzyme catalyzes the hydrolysis of ATP coupled with the translocation of calcium from the cytosol to an endomembrane compartment. The chain is Calcium-transporting ATPase, endoplasmic reticulum-type from Solanum lycopersicum (Tomato).